Reading from the N-terminus, the 610-residue chain is METAPKPGKDVPPKKDKLQTKRKKPRRYWEEETVPTTAGASPGPPRNKKNRELRPQRPKNAYILKKSRISKKPQVPKKPREWKNPESQRGLSGTQDPFPGPAPVPVEVVQKFCRIDKSRKLPHSKAKTRSRLEVAEAEEEETSIKAARSELLLAEEPGFLEGEDGEDTAKICQADIVEAVDIASAAKHFDLNLRQFGPYRLNYSRTGRHLAFGGRRGHVAALDWVTKKLMCEINVMEAVRDIRFLHSEALLAVAQNRWLHIYDNQGIELHCIRRCDRVTRLEFLPFHFLLATASETGFLTYLDVSVGKIVAALNARAGRLDVMSQNPYNAVIHLGHSNGTVSLWSPAMKEPLAKILCHRGGVRAVAVDSTGTYMATSGLDHQLKIFDLRGTYQPLSTRTLPHGAGHLAFSQRGLLVAGMGDVVNIWAGQGKASPPSLEQPYLTHRLSGPVHGLQFCPFEDVLGVGHTGGITSMLVPGAGEPNFDGLESNPYRSRKQRQEWEVKALLEKVPAELICLDPRALAEVDVISLEQGKKEQIERLGYDPQAKAPFQPKPKQKGRSSTASLVKRKRKVMDEEHRDKVRQSLQQQHHKEAKAKPTGARPSALDRFVR.

The disordered stretch occupies residues 1–103 (METAPKPGKD…TQDPFPGPAP (103 aa)). The segment covering 7–19 (PGKDVPPKKDKLQ) has biased composition (basic and acidic residues). Ser-41 is modified (phosphoserine). A compositionally biased stretch (basic residues) spans 65–77 (KKSRISKKPQVPK). 6 WD repeats span residues 193–234 (LRQF…CEIN), 235–272 (VMEA…LHCI), 274–312 (RCDR…IVAA), 315–354 (ARAG…PLAK), 357–396 (CHRG…QPLS), and 399–436 (TLPH…SPPS). The interval 538 to 610 (ERLGYDPQAK…RPSALDRFVR (73 aa)) is disordered. Basic and acidic residues predominate over residues 572 to 582 (VMDEEHRDKVR).

As to quaternary structure, part of the small subunit (SSU) processome, composed of more than 70 proteins and the RNA chaperone small nucleolar RNA (snoRNA) U3. Interacts with DDX21, NCL, NOP2 and EBNA1BP2.

The protein localises to the nucleus. It is found in the nucleolus. In terms of biological role, scaffold component of the nucleolar structure. Required for localization of DDX21 and NCL to the granular compartment of the nucleolus. Part of the small subunit (SSU) processome, first precursor of the small eukaryotic ribosomal subunit. During the assembly of the SSU processome in the nucleolus, many ribosome biogenesis factors, an RNA chaperone and ribosomal proteins associate with the nascent pre-rRNA and work in concert to generate RNA folding, modifications, rearrangements and cleavage as well as targeted degradation of pre-ribosomal RNA by the RNA exosome. This is WD repeat-containing protein 46 (WDR46) from Homo sapiens (Human).